We begin with the raw amino-acid sequence, 343 residues long: L-threonine 3-dehydrogenase (343 aa).

Residue C38 coordinates Zn(2+). Active-site charge relay system residues include T40 and H43. Residues H63, E64, C93, C96, C99, and C107 each contribute to the Zn(2+) site. NAD(+) contacts are provided by residues I175, D195, R200, 262-264 (LGI), and 286-287 (IY).

It belongs to the zinc-containing alcohol dehydrogenase family. As to quaternary structure, homotetramer. Zn(2+) serves as cofactor.

The protein localises to the cytoplasm. The enzyme catalyses L-threonine + NAD(+) = (2S)-2-amino-3-oxobutanoate + NADH + H(+). It participates in amino-acid degradation; L-threonine degradation via oxydo-reductase pathway; glycine from L-threonine: step 1/2. Functionally, catalyzes the NAD(+)-dependent oxidation of L-threonine to 2-amino-3-ketobutyrate. This Paraburkholderia phytofirmans (strain DSM 17436 / LMG 22146 / PsJN) (Burkholderia phytofirmans) protein is L-threonine 3-dehydrogenase.